The sequence spans 422 residues: ATP-dependent Clp protease ATP-binding subunit ClpX 1 (422 aa).

Residues 4 to 57 enclose the ClpX-type ZB domain; that stretch reads DRKNRESGKLLYCSFCGKSQHEVRKLIAGPAVFVCDECVELCNDIIREDLQGSE. Zn(2+) is bound by residues cysteine 16, cysteine 19, cysteine 38, and cysteine 41. 120 to 127 contributes to the ATP binding site; the sequence is PTGSGKTL.

Belongs to the ClpX chaperone family. Component of the ClpX-ClpP complex. Forms a hexameric ring that, in the presence of ATP, binds to fourteen ClpP subunits assembled into a disk-like structure with a central cavity, resembling the structure of eukaryotic proteasomes.

Functionally, ATP-dependent specificity component of the Clp protease. It directs the protease to specific substrates. Can perform chaperone functions in the absence of ClpP. In Methylococcus capsulatus (strain ATCC 33009 / NCIMB 11132 / Bath), this protein is ATP-dependent Clp protease ATP-binding subunit ClpX 1.